We begin with the raw amino-acid sequence, 583 residues long: Pentatricopeptide repeat-containing protein At3g59040 (583 aa).

10 PPR repeats span residues 138–172 (SEID…GSTP), 173–207 (NVIS…GPEP), 208–242 (SAIT…KKSP), 246–280 (DQKM…GVPQ), 281–312 (STVT…DIQP), 313–347 (DVVS…GVRP), 348–382 (THKA…RIFP), 383–417 (DLWS…GFEP), 418–452 (NIVT…GIKA), and 453–487 (NQTI…GVPP). Positions 525–583 (VYGSDDDEEGVEDISSESSDDEDEGDDDDDDARETVLYDKPQEGSLGYGSLQTEELVGL) are disordered. Positions 528–556 (SDDDEEGVEDISSESSDDEDEGDDDDDDA) are enriched in acidic residues. Positions 557 to 566 (RETVLYDKPQ) are enriched in basic and acidic residues.

The protein belongs to the PPR family. P subfamily.

This Arabidopsis thaliana (Mouse-ear cress) protein is Pentatricopeptide repeat-containing protein At3g59040.